Reading from the N-terminus, the 303-residue chain is tRNA dimethylallyltransferase (303 aa).

Position 13-20 (13-20 (GPTASGKS)) interacts with ATP. 15 to 20 (TASGKS) provides a ligand contact to substrate. Interaction with substrate tRNA stretches follow at residues 38–41 (DSMQ) and 162–166 (QRLLR).

This sequence belongs to the IPP transferase family. In terms of assembly, monomer. It depends on Mg(2+) as a cofactor.

The catalysed reaction is adenosine(37) in tRNA + dimethylallyl diphosphate = N(6)-dimethylallyladenosine(37) in tRNA + diphosphate. In terms of biological role, catalyzes the transfer of a dimethylallyl group onto the adenine at position 37 in tRNAs that read codons beginning with uridine, leading to the formation of N6-(dimethylallyl)adenosine (i(6)A). The sequence is that of tRNA dimethylallyltransferase from Methylocella silvestris (strain DSM 15510 / CIP 108128 / LMG 27833 / NCIMB 13906 / BL2).